The sequence spans 315 residues: Lipoyl synthase (315 aa).

Residues cysteine 62, cysteine 67, cysteine 73, cysteine 88, cysteine 92, cysteine 95, and serine 302 each contribute to the [4Fe-4S] cluster site. One can recognise a Radical SAM core domain in the interval 74-292 (FNHGTATFMI…KIALKLGFIR (219 aa)).

Belongs to the radical SAM superfamily. Lipoyl synthase family. Requires [4Fe-4S] cluster as cofactor.

The protein localises to the cytoplasm. It carries out the reaction [[Fe-S] cluster scaffold protein carrying a second [4Fe-4S](2+) cluster] + N(6)-octanoyl-L-lysyl-[protein] + 2 oxidized [2Fe-2S]-[ferredoxin] + 2 S-adenosyl-L-methionine + 4 H(+) = [[Fe-S] cluster scaffold protein] + N(6)-[(R)-dihydrolipoyl]-L-lysyl-[protein] + 4 Fe(3+) + 2 hydrogen sulfide + 2 5'-deoxyadenosine + 2 L-methionine + 2 reduced [2Fe-2S]-[ferredoxin]. It functions in the pathway protein modification; protein lipoylation via endogenous pathway; protein N(6)-(lipoyl)lysine from octanoyl-[acyl-carrier-protein]: step 2/2. Functionally, catalyzes the radical-mediated insertion of two sulfur atoms into the C-6 and C-8 positions of the octanoyl moiety bound to the lipoyl domains of lipoate-dependent enzymes, thereby converting the octanoylated domains into lipoylated derivatives. This is Lipoyl synthase from Vesicomyosocius okutanii subsp. Calyptogena okutanii (strain HA).